A 418-amino-acid polypeptide reads, in one-letter code: NADH-quinone oxidoreductase subunit H (418 aa).

Helical transmembrane passes span 15 to 35 (LVLG…LVAI), 83 to 103 (FVYF…FAFI), 123 to 143 (LPVA…GIVL), 164 to 184 (VISY…YAGS), 197 to 217 (VWFV…MVGE), 262 to 282 (LATA…MWAG), 287 to 307 (WWPV…YFWL), 321 to 341 (GLGW…AAVI), and 349 to 369 (YAHW…ALVL). Residues 394–418 (AAHRAGFHPGIPDTAAAGESAGGRE) form a disordered region.

Belongs to the complex I subunit 1 family. NDH-1 is composed of 14 different subunits. Subunits NuoA, H, J, K, L, M, N constitute the membrane sector of the complex.

It localises to the cell membrane. The enzyme catalyses a quinone + NADH + 5 H(+)(in) = a quinol + NAD(+) + 4 H(+)(out). In terms of biological role, NDH-1 shuttles electrons from NADH, via FMN and iron-sulfur (Fe-S) centers, to quinones in the respiratory chain. The immediate electron acceptor for the enzyme in this species is believed to be menaquinone. Couples the redox reaction to proton translocation (for every two electrons transferred, four hydrogen ions are translocated across the cytoplasmic membrane), and thus conserves the redox energy in a proton gradient. This subunit may bind ubiquinone. The chain is NADH-quinone oxidoreductase subunit H from Mycobacterium avium (strain 104).